Here is a 674-residue protein sequence, read N- to C-terminus: NADH-ubiquinone oxidoreductase chain 5 (674 aa).

The next 17 membrane-spanning stretches (helical) occupy residues 27-47 (GAHI…IVAF), 81-101 (LTVS…IFSV), 113-133 (FFAY…GDNY), 135-155 (IMFV…NFWF), 173-193 (VGDM…GNLD), 200-220 (IAPF…LLAA), 242-262 (TPVS…YLLL), 275-295 (LIVI…TGLL), 301-323 (RVIA…LSQY), 325-345 (VALF…LAAG), 363-383 (LIGF…SLIA), 410-430 (VAYW…LRLI), 453-473 (TIVM…GYVA), 514-534 (AIGT…LPVF), 556-576 (YVDV…GYVI), 616-636 (ALYL…PVLL), and 639-659 (ALIN…IPYI).

This sequence belongs to the complex I subunit 5 family.

It is found in the mitochondrion inner membrane. The enzyme catalyses a ubiquinone + NADH + 5 H(+)(in) = a ubiquinol + NAD(+) + 4 H(+)(out). Its function is as follows. Core subunit of the mitochondrial membrane respiratory chain NADH dehydrogenase (Complex I) that is believed to belong to the minimal assembly required for catalysis. Complex I functions in the transfer of electrons from NADH to the respiratory chain. The immediate electron acceptor for the enzyme is believed to be ubiquinone. In Mycosarcoma maydis (Corn smut fungus), this protein is NADH-ubiquinone oxidoreductase chain 5 (ND5).